Here is a 497-residue protein sequence, read N- to C-terminus: MELVVKSVAAASVKTATLVIPVGENRKLGAVAKAVDLASEGAISAVLKRGDLAGKPGQTLLLQNLQGLKAERVLLVGSGKDEALGDRTWRKLVASVAGVLKGLNGADAVLALDDVAVNNRDAHYGKYRLLAETLLDGEYVFDRFKSQKVEPRALKKVTLLADKAGQAEVERAVKHASAIATGMAFTRDLGNLPPNLCHPSFLAEQAKELGKAHKALKVEVLDEKKIKDLGMGAFYAVGQGSDQPPRLIVLNYQGGKKADKPFVLVGKGITFDTGGISLKPGAGMDEMKYDMCGAASVFGTLRAVLELQLPVNLVCLLACAENMPSGGATRPGDIVTTMSGQTVEILNTDAEGRLVLCDTLTYAERFKPQAVIDIATLTGACIVALGSHTTGLMGNNDDLVGQLLDAGKRADDRAWQLPLFDEYQEQLDSPFADMGNIGGPKAGTITAGCFLSRFAKAYNWAHMDIAGTAWISGGKDKGATGRPVPLLTQYLLDRAGA.

Lysine 267 and aspartate 272 together coordinate Mn(2+). Lysine 279 is an active-site residue. The Mn(2+) site is built by aspartate 290, aspartate 349, and glutamate 351. Residue arginine 353 is part of the active site.

It belongs to the peptidase M17 family. Requires Mn(2+) as cofactor.

The protein localises to the cytoplasm. It carries out the reaction Release of an N-terminal amino acid, Xaa-|-Yaa-, in which Xaa is preferably Leu, but may be other amino acids including Pro although not Arg or Lys, and Yaa may be Pro. Amino acid amides and methyl esters are also readily hydrolyzed, but rates on arylamides are exceedingly low.. It catalyses the reaction Release of an N-terminal amino acid, preferentially leucine, but not glutamic or aspartic acids.. Functionally, presumably involved in the processing and regular turnover of intracellular proteins. Catalyzes the removal of unsubstituted N-terminal amino acids from various peptides. This chain is Cytosol aminopeptidase (pepA), found in Pseudomonas putida (Arthrobacter siderocapsulatus).